Here is a 338-residue protein sequence, read N- to C-terminus: Ketol-acid reductoisomerase (NADP(+)) (338 aa).

A KARI N-terminal Rossmann domain is found at 1-181 (MKVFYDKDCD…GGGRAGIIET (181 aa)). NADP(+) contacts are provided by residues 24-27 (YGSQ), Arg47, and Ser52. His107 is an active-site residue. Gly133 serves as a coordination point for NADP(+). One can recognise a KARI C-terminal knotted domain in the interval 182 to 327 (NFREETETDL…AKLRAMMPWI (146 aa)). The Mg(2+) site is built by Asp190, Glu194, Glu226, and Glu230. Ser251 lines the substrate pocket.

This sequence belongs to the ketol-acid reductoisomerase family. Requires Mg(2+) as cofactor.

The enzyme catalyses (2R)-2,3-dihydroxy-3-methylbutanoate + NADP(+) = (2S)-2-acetolactate + NADPH + H(+). It catalyses the reaction (2R,3R)-2,3-dihydroxy-3-methylpentanoate + NADP(+) = (S)-2-ethyl-2-hydroxy-3-oxobutanoate + NADPH + H(+). It functions in the pathway amino-acid biosynthesis; L-isoleucine biosynthesis; L-isoleucine from 2-oxobutanoate: step 2/4. Its pathway is amino-acid biosynthesis; L-valine biosynthesis; L-valine from pyruvate: step 2/4. Involved in the biosynthesis of branched-chain amino acids (BCAA). Catalyzes an alkyl-migration followed by a ketol-acid reduction of (S)-2-acetolactate (S2AL) to yield (R)-2,3-dihydroxy-isovalerate. In the isomerase reaction, S2AL is rearranged via a Mg-dependent methyl migration to produce 3-hydroxy-3-methyl-2-ketobutyrate (HMKB). In the reductase reaction, this 2-ketoacid undergoes a metal-dependent reduction by NADPH to yield (R)-2,3-dihydroxy-isovalerate. The chain is Ketol-acid reductoisomerase (NADP(+)) from Herminiimonas arsenicoxydans.